The chain runs to 170 residues: ATP synthase subunit b (170 aa).

A helical membrane pass occupies residues 30-50 (FFFVLAIFLVVLGVIGTFVVP).

This sequence belongs to the ATPase B chain family. As to quaternary structure, F-type ATPases have 2 components, F(1) - the catalytic core - and F(0) - the membrane proton channel. F(1) has five subunits: alpha(3), beta(3), gamma(1), delta(1), epsilon(1). F(0) has three main subunits: a(1), b(2) and c(10-14). The alpha and beta chains form an alternating ring which encloses part of the gamma chain. F(1) is attached to F(0) by a central stalk formed by the gamma and epsilon chains, while a peripheral stalk is formed by the delta and b chains.

It is found in the cell membrane. Functionally, f(1)F(0) ATP synthase produces ATP from ADP in the presence of a proton or sodium gradient. F-type ATPases consist of two structural domains, F(1) containing the extramembraneous catalytic core and F(0) containing the membrane proton channel, linked together by a central stalk and a peripheral stalk. During catalysis, ATP synthesis in the catalytic domain of F(1) is coupled via a rotary mechanism of the central stalk subunits to proton translocation. Component of the F(0) channel, it forms part of the peripheral stalk, linking F(1) to F(0). The chain is ATP synthase subunit b from Mycobacterium leprae (strain TN).